Consider the following 430-residue polypeptide: Adenylosuccinate synthetase (430 aa).

Residues 12–18 and 40–42 contribute to the GTP site; these read GDEGKGK and GHT. Catalysis depends on Asp-13, which acts as the Proton acceptor. Residues Asp-13 and Gly-40 each contribute to the Mg(2+) site. IMP contacts are provided by residues 13–16, 38–41, Thr-130, Arg-144, Gln-224, Thr-239, and Arg-303; these read DEGK and NAGH. Residue His-41 is the Proton donor of the active site. Substrate is bound at residue 299-305; sequence VNTGRKR. GTP contacts are provided by residues Arg-305, 331–333, and 413–415; these read KLD and STS.

It belongs to the adenylosuccinate synthetase family. In terms of assembly, homodimer. Requires Mg(2+) as cofactor.

It is found in the cytoplasm. The enzyme catalyses IMP + L-aspartate + GTP = N(6)-(1,2-dicarboxyethyl)-AMP + GDP + phosphate + 2 H(+). It participates in purine metabolism; AMP biosynthesis via de novo pathway; AMP from IMP: step 1/2. Plays an important role in the de novo pathway of purine nucleotide biosynthesis. Catalyzes the first committed step in the biosynthesis of AMP from IMP. In Rhodopseudomonas palustris (strain BisA53), this protein is Adenylosuccinate synthetase.